The primary structure comprises 497 residues: Probable cytosol aminopeptidase (497 aa).

Mn(2+)-binding residues include Lys267 and Asp272. Lys279 is a catalytic residue. Positions 290, 349, and 351 each coordinate Mn(2+). Arg353 is an active-site residue.

It belongs to the peptidase M17 family. Requires Mn(2+) as cofactor.

The protein resides in the cytoplasm. It carries out the reaction Release of an N-terminal amino acid, Xaa-|-Yaa-, in which Xaa is preferably Leu, but may be other amino acids including Pro although not Arg or Lys, and Yaa may be Pro. Amino acid amides and methyl esters are also readily hydrolyzed, but rates on arylamides are exceedingly low.. It catalyses the reaction Release of an N-terminal amino acid, preferentially leucine, but not glutamic or aspartic acids.. In terms of biological role, presumably involved in the processing and regular turnover of intracellular proteins. Catalyzes the removal of unsubstituted N-terminal amino acids from various peptides. The sequence is that of Probable cytosol aminopeptidase from Nitrosomonas europaea (strain ATCC 19718 / CIP 103999 / KCTC 2705 / NBRC 14298).